The chain runs to 217 residues: ATP phosphoribosyltransferase (217 aa).

It belongs to the ATP phosphoribosyltransferase family. Short subfamily. As to quaternary structure, heteromultimer composed of HisG and HisZ subunits.

The protein resides in the cytoplasm. The enzyme catalyses 1-(5-phospho-beta-D-ribosyl)-ATP + diphosphate = 5-phospho-alpha-D-ribose 1-diphosphate + ATP. It participates in amino-acid biosynthesis; L-histidine biosynthesis; L-histidine from 5-phospho-alpha-D-ribose 1-diphosphate: step 1/9. In terms of biological role, catalyzes the condensation of ATP and 5-phosphoribose 1-diphosphate to form N'-(5'-phosphoribosyl)-ATP (PR-ATP). Has a crucial role in the pathway because the rate of histidine biosynthesis seems to be controlled primarily by regulation of HisG enzymatic activity. The protein is ATP phosphoribosyltransferase of Burkholderia orbicola (strain MC0-3).